Consider the following 292-residue polypeptide: Probable septum site-determining protein MinC (292 aa).

Residues 109–188 (QVIDTAPPND…PQSSSALVIT (80 aa)) form a disordered region. Over residues 140 to 150 (QDDEADGEQAD) the composition is skewed to acidic residues. The span at 171 to 185 (ANRPTATPPQSSSAL) shows a compositional bias: polar residues.

Belongs to the MinC family. In terms of assembly, interacts with MinD and FtsZ.

In terms of biological role, cell division inhibitor that blocks the formation of polar Z ring septums. Rapidly oscillates between the poles of the cell to destabilize FtsZ filaments that have formed before they mature into polar Z rings. Prevents FtsZ polymerization. This chain is Probable septum site-determining protein MinC, found in Bordetella pertussis (strain Tohama I / ATCC BAA-589 / NCTC 13251).